Reading from the N-terminus, the 524-residue chain is Bifunctional methyltransferase (524 aa).

The interval 1-306 (MQCSIKQILS…GHSRVILFSP (306 aa)) is hemK. Residues 1-308 (MQCSIKQILS…SRVILFSPIN (308 aa)) are RF MTase. S-adenosyl-L-methionine-binding positions include 146 to 150 (GTGSG), Asp-169, Trp-198, Asn-213, Glu-353, Glu-378, Asn-405, and Asp-427. 213–216 (NPPY) contributes to the substrate binding site. The segment at 307 to 524 (INLNRSYARR…MILRHVLGDH (218 aa)) is tRNA (guanine-N(7)-)-methyltransferase. Positions 311–524 (RSYARRIGKS…MILRHVLGDH (214 aa)) are tRNA MTase. Asp-427 is a catalytic residue. Residues Lys-431 and Asp-463 each coordinate substrate.

The protein in the C-terminal section; belongs to the class I-like SAM-binding methyltransferase superfamily. TrmB family. This sequence in the N-terminal section; belongs to the protein N5-glutamine methyltransferase family. PrmC subfamily.

It carries out the reaction L-glutaminyl-[peptide chain release factor] + S-adenosyl-L-methionine = N(5)-methyl-L-glutaminyl-[peptide chain release factor] + S-adenosyl-L-homocysteine + H(+). It catalyses the reaction guanosine(46) in tRNA + S-adenosyl-L-methionine = N(7)-methylguanosine(46) in tRNA + S-adenosyl-L-homocysteine. Methylates the class 1 translation termination release factors RF1/PrfA and RF2/PrfB on the glutamine residue of the universally conserved GGQ motif. Its function is as follows. Catalyzes the formation of N(7)-methylguanine at position 46 (m7G46) in tRNA. This is Bifunctional methyltransferase (prmC/trmB) from Rickettsia conorii (strain ATCC VR-613 / Malish 7).